The chain runs to 196 residues: Nucleoid occlusion factor SlmA (196 aa).

Positions 7–68 constitute an HTH tetR-type domain; sequence TNRREEILQA…GLIEFIEDSI (62 aa). The H-T-H motif DNA-binding region spans 31-50; the sequence is TTAKLAAQVGVSEAALYRHF. Residues 115–142 are a coiled coil; it reads EQDRLQSRINQLFERIETQLRQVLRERK.

Belongs to the nucleoid occlusion factor SlmA family. As to quaternary structure, homodimer. Interacts with FtsZ.

It localises to the cytoplasm. It is found in the nucleoid. Functionally, required for nucleoid occlusion (NO) phenomenon, which prevents Z-ring formation and cell division over the nucleoid. Acts as a DNA-associated cell division inhibitor that binds simultaneously chromosomal DNA and FtsZ, and disrupts the assembly of FtsZ polymers. SlmA-DNA-binding sequences (SBS) are dispersed on non-Ter regions of the chromosome, preventing FtsZ polymerization at these regions. This is Nucleoid occlusion factor SlmA from Photobacterium profundum (strain SS9).